Consider the following 278-residue polypeptide: Large ribosomal subunit protein uL2 (278 aa).

The tract at residues 223–278 is disordered; that stretch reads RGSAMNPNDHPHGGGEGKAPVGRKAPMTPWGKKALGVKTRNKKKASTKLIVRRRTK. A compositionally biased stretch (basic residues) spans 261–278; the sequence is TRNKKKASTKLIVRRRTK.

The protein belongs to the universal ribosomal protein uL2 family. In terms of assembly, part of the 50S ribosomal subunit. Forms a bridge to the 30S subunit in the 70S ribosome.

In terms of biological role, one of the primary rRNA binding proteins. Required for association of the 30S and 50S subunits to form the 70S ribosome, for tRNA binding and peptide bond formation. It has been suggested to have peptidyltransferase activity; this is somewhat controversial. Makes several contacts with the 16S rRNA in the 70S ribosome. The sequence is that of Large ribosomal subunit protein uL2 from Spiroplasma kunkelii.